The chain runs to 558 residues: Large cysteine-rich periplasmic protein OmcB (558 aa).

The first 24 residues, 1-24 (MSKLIRRVVTVLALTSMASSFASG), serve as a signal peptide directing secretion. The propeptide occupies 25–40 (KTEVAAAESLVTRFIA).

Part of a disulfide cross-linked outer membrane complex (COMC) composed of the major outer membrane porin (MOMP), the small cysteine-rich protein (OmcA) and the large cysteine-rich periplasmic protein (OmcB).

It localises to the periplasm. Its function is as follows. In elementary bodies (EBs, the infectious stage, which is able to survive outside the host cell) provides the structural integrity of the outer envelope through disulfide cross-links with the small cysteine-rich protein and the major outer membrane porin. It has been described in publications as the Sarkosyl-insoluble COMC (Chlamydia outer membrane complex), and serves as the functional equivalent of peptidoglycan. It is present but the disulfide bonds are reduced in reticulate bodies (RBs). In Chlamydia felis (strain Fe/C-56) (Chlamydophila felis), this protein is Large cysteine-rich periplasmic protein OmcB (omcB).